The sequence spans 162 residues: Crossover junction endodeoxyribonuclease RuvC (162 aa).

Active-site residues include aspartate 7, glutamate 67, and aspartate 140. Residues aspartate 7, glutamate 67, and aspartate 140 each coordinate Mg(2+).

Belongs to the RuvC family. Homodimer which binds Holliday junction (HJ) DNA. The HJ becomes 2-fold symmetrical on binding to RuvC with unstacked arms; it has a different conformation from HJ DNA in complex with RuvA. In the full resolvosome a probable DNA-RuvA(4)-RuvB(12)-RuvC(2) complex forms which resolves the HJ. Requires Mg(2+) as cofactor.

Its subcellular location is the cytoplasm. It catalyses the reaction Endonucleolytic cleavage at a junction such as a reciprocal single-stranded crossover between two homologous DNA duplexes (Holliday junction).. Its function is as follows. The RuvA-RuvB-RuvC complex processes Holliday junction (HJ) DNA during genetic recombination and DNA repair. Endonuclease that resolves HJ intermediates. Cleaves cruciform DNA by making single-stranded nicks across the HJ at symmetrical positions within the homologous arms, yielding a 5'-phosphate and a 3'-hydroxyl group; requires a central core of homology in the junction. The consensus cleavage sequence is 5'-(A/T)TT(C/G)-3'. Cleavage occurs on the 3'-side of the TT dinucleotide at the point of strand exchange. HJ branch migration catalyzed by RuvA-RuvB allows RuvC to scan DNA until it finds its consensus sequence, where it cleaves and resolves the cruciform DNA. In Wolinella succinogenes (strain ATCC 29543 / DSM 1740 / CCUG 13145 / JCM 31913 / LMG 7466 / NCTC 11488 / FDC 602W) (Vibrio succinogenes), this protein is Crossover junction endodeoxyribonuclease RuvC.